The primary structure comprises 695 residues: MENVEARYVDLDKLRNIGIMAHIDAGKTTTTERILYYTGRKHFLGDVDEGNTTTDWMPQEKERGITIQSAATTCFWKGYRINIIDTPGHVDFTAEVERALRVLDGAIAVFDATAGVEPQSETVWRQADKYNVPRIAFMNKMDKVGADFYMAVETLVTKLKANPIPVQMPIGSEKDFQGVIDLIKMKAIYWVSEDGSVYEERDIPEELREEAEMRREEMLEKVAELDEEILEKYLEGEEISEEEIKRILRKATIENRAVPVLCGAAKANKGIQPLLDAVIDYLPSPLDLPPVKGWRVSDGEIVYRKPDENEPFTALVFKVQVDPYIGKLVYFRVYSGRLEKGSYVYNSTKGQRERISRIVFMHADKREEVDYVRPGDIAAGVGLKVSQTGDTLCDEKEPVILEKIDFPEPVISLAIEPATKADEEKLVKALLALSEEDPTLQVRVDKETGETIISGMGELHLEIVVDRLKREFGVNVRVGQPQVAYRETIKRPAEAEGKYIRQTGGRGQYGHVILRIEPIPEEEGKNFEFIDKTVGGVIPKEFMPAIEAGIKEAMMSGPLAGYPVVRVRAVVLDGSYHEVDSSEMAFKIAASMAFKEAMKKAQPVLLEPIMKLEITTPEEYMGNIISDLNSRRAKIESLETRGHLKIVVAKIPLSETFGYATVLRSLSQGRASYIMQFSHYQEVPEKIAEKIIKVV.

One can recognise a tr-type G domain in the interval aspartate 12–leucine 286. Residues alanine 21–threonine 28, aspartate 85–histidine 89, and asparagine 139–aspartate 142 contribute to the GTP site.

This sequence belongs to the TRAFAC class translation factor GTPase superfamily. Classic translation factor GTPase family. EF-G/EF-2 subfamily.

The protein localises to the cytoplasm. Functionally, catalyzes the GTP-dependent ribosomal translocation step during translation elongation. During this step, the ribosome changes from the pre-translocational (PRE) to the post-translocational (POST) state as the newly formed A-site-bound peptidyl-tRNA and P-site-bound deacylated tRNA move to the P and E sites, respectively. Catalyzes the coordinated movement of the two tRNA molecules, the mRNA and conformational changes in the ribosome. The polypeptide is Elongation factor G (Thermotoga sp. (strain RQ2)).